Reading from the N-terminus, the 172-residue chain is R-phycocyanin beta subunit (172 aa).

Asparagine 72 is subject to N4-methylasparagine. Cysteine 82 contacts (2R,3E)-phycocyanobilin. Residue cysteine 153 coordinates (2R,3E)-phycoerythrobilin.

This sequence belongs to the phycobiliprotein family. As to quaternary structure, heterodimer of an alpha and a beta subunit, which further assembles into trimers and the trimers into hexamers. Post-translationally, contains two covalently linked bilin chromophores.

Its subcellular location is the cellular thylakoid membrane. Light-harvesting photosynthetic bile pigment-protein from the phycobiliprotein complex (phycobilisome, PBS). Phycocyanin is the major phycobiliprotein in the PBS rod. This is R-phycocyanin beta subunit (rpcB) from Synechococcus sp. (strain WH7803).